The chain runs to 666 residues: DNA mismatch repair protein MutL (666 aa).

This sequence belongs to the DNA mismatch repair MutL/HexB family.

In terms of biological role, this protein is involved in the repair of mismatches in DNA. It is required for dam-dependent methyl-directed DNA mismatch repair. May act as a 'molecular matchmaker', a protein that promotes the formation of a stable complex between two or more DNA-binding proteins in an ATP-dependent manner without itself being part of a final effector complex. The polypeptide is DNA mismatch repair protein MutL (Clostridium botulinum (strain Langeland / NCTC 10281 / Type F)).